The following is a 251-amino-acid chain: Phosphate import ATP-binding protein PstB 2 (251 aa).

Residues 5 to 246 enclose the ABC transporter domain; it reads ITTKDVHLYY…PDKEQTADYL (242 aa). 37 to 44 is a binding site for ATP; the sequence is GPSGCGKS.

It belongs to the ABC transporter superfamily. Phosphate importer (TC 3.A.1.7) family. As to quaternary structure, the complex is composed of two ATP-binding proteins (PstB), two transmembrane proteins (PstC and PstA) and a solute-binding protein (PstS).

It localises to the cell membrane. It carries out the reaction phosphate(out) + ATP + H2O = ADP + 2 phosphate(in) + H(+). Its function is as follows. Part of the ABC transporter complex PstSACB involved in phosphate import. Responsible for energy coupling to the transport system. This is Phosphate import ATP-binding protein PstB 2 from Ligilactobacillus salivarius (strain UCC118) (Lactobacillus salivarius).